The sequence spans 363 residues: GTPase Obg (363 aa).

Residues 1–159 (MKFIDEAKIY…LELRLELRVL (159 aa)) enclose the Obg domain. An OBG-type G domain is found at 160–338 (ADVGLLGLPN…LIYAISEALE (179 aa)). GTP-binding positions include 166-173 (GLPNAGKS), 191-195 (FTTLH), 213-216 (DVPG), 284-287 (NKLD), and 319-321 (AAI). Positions 173 and 193 each coordinate Mg(2+). Positions 342 to 363 (RPEIGDLDDNDEDSDEIIRDTE) are disordered. The span at 346–356 (GDLDDNDEDSD) shows a compositional bias: acidic residues.

Belongs to the TRAFAC class OBG-HflX-like GTPase superfamily. OBG GTPase family. Monomer. Mg(2+) serves as cofactor.

The protein resides in the cytoplasm. Functionally, an essential GTPase which binds GTP, GDP and possibly (p)ppGpp with moderate affinity, with high nucleotide exchange rates and a fairly low GTP hydrolysis rate. Plays a role in control of the cell cycle, stress response, ribosome biogenesis and in those bacteria that undergo differentiation, in morphogenesis control. The polypeptide is GTPase Obg (Dechloromonas aromatica (strain RCB)).